A 189-amino-acid chain; its full sequence is uncharacterized protein (189 aa).

Positions 1 to 23 (MVPPKPALWALLLALLGTAPSRA) are cleaved as a signal peptide. Asparagine 72 carries an N-linked (GlcNAc...) asparagine glycan.

This is an uncharacterized protein from Homo sapiens (Human).